Reading from the N-terminus, the 657-residue chain is Zinc transporter ZIP4 (657 aa).

Positions 1 to 22 (MMLPKSLTQGLLLAMLVGTAAM) are cleaved as a signal peptide. The Extracellular portion of the chain corresponds to 23 to 335 (VQPYHLLSLL…QDQLSQAERY (313 aa)). Residues Asn-193, Asn-220, and Asn-268 are each glycosylated (N-linked (GlcNAc...) asparagine). A helical membrane pass occupies residues 336–356 (LYGSLATLLICLCAVFGLLLL). Topologically, residues 357-374 (TCAKCSTATHYIMQTFLS) are cytoplasmic. Residues 375-395 (LAVGALTGDALLHLIPKVLGL) traverse the membrane as a helical segment. The Extracellular portion of the chain corresponds to 396–417 (HTHSGEVHSHEEESIGGQSTWR). The helical transmembrane segment at 418–438 (LLAVLGGFYIFFLFESFFNLL) threads the bilayer. The Cytoplasmic portion of the chain corresponds to 439-508 (LPRDQDHEKD…LRAELRMLPY (70 aa)). Residues 462 to 464 (LQL) carry the Essential for SLC39A4 endocytosis motif. Residues 467-491 (SNLRQSKQPHESSRSDLVTEETPEL) are disordered. Residues 509-528 (LITLGDAVHNFADGLAVGAA) form a helical membrane-spanning segment. Residues His-517, Asn-518, and Asp-521 each contribute to the Zn(2+) site. At 529–536 (FSSTWKTG) the chain is on the extracellular side. The helical transmembrane segment at 537 to 563 (LATSLAVFCHELPHELGDFAALLHAGL) threads the bilayer. Residues His-546, Glu-547, and His-550 each contribute to the Zn(2+) site. The Cytoplasmic portion of the chain corresponds to 564–568 (TVKRA). Residues 569-589 (LLLNLASALTAFAGLYVALAV) traverse the membrane as a helical segment. Residues 590 to 597 (GVGEEGET) are Extracellular-facing. A helical transmembrane segment spans residues 598-618 (WILAVATGLFLYVALCDMLPA). At 619 to 627 (MMNVRDQRP) the chain is on the cytoplasmic side. A helical transmembrane segment spans residues 628 to 648 (WLLFLLHNVGLLGGWTILLLL). Residues 649 to 657 (SLYEDSITF) lie on the Extracellular side of the membrane.

It belongs to the ZIP transporter (TC 2.A.5) family. Homodimer; homodimerization is mediated by the transmembrane domain. In terms of processing, the extracellular N-terminal ectodomain is cleaved when cells are Zn(2+) deficient, N-terminally cleaved SLC39A4 is internalized at a faster rate. Post-translationally, under excess Zn(2+) conditions, SLC39A4 on the cell surface is rapidly endocytosed, ubiquitinated and degraded. Glycosylated. As to expression, expressed in duodenum, jejunum, and ileum.

The protein localises to the cell membrane. The protein resides in the recycling endosome membrane. It localises to the apical cell membrane. It carries out the reaction Zn(2+)(in) = Zn(2+)(out). Its function is as follows. Selective transporter that mediates the uptake of Zn(2+). Plays an essential role for dietary zinc uptake from small intestine. The Zn(2+) uniporter activity is regulated by zinc availability. Also exhibits polyspecific binding and transport of Cu(2+), Cd(2+) and possibly Ni(2+) but at higher concentrations. In Rattus norvegicus (Rat), this protein is Zinc transporter ZIP4 (Slc39a4).